The chain runs to 314 residues: Methionyl-tRNA formyltransferase (314 aa).

Position 110-113 (110-113 (SLLP)) interacts with (6S)-5,6,7,8-tetrahydrofolate.

It belongs to the Fmt family.

It carries out the reaction L-methionyl-tRNA(fMet) + (6R)-10-formyltetrahydrofolate = N-formyl-L-methionyl-tRNA(fMet) + (6S)-5,6,7,8-tetrahydrofolate + H(+). Attaches a formyl group to the free amino group of methionyl-tRNA(fMet). The formyl group appears to play a dual role in the initiator identity of N-formylmethionyl-tRNA by promoting its recognition by IF2 and preventing the misappropriation of this tRNA by the elongation apparatus. This is Methionyl-tRNA formyltransferase from Bacillus thuringiensis subsp. konkukian (strain 97-27).